The following is a 324-amino-acid chain: tRNA-cytidine(32) 2-sulfurtransferase (324 aa).

Residues 1–26 form a disordered region; that stretch reads MQDLIDSPTAARTPAEEKIRHEGNKL. Basic and acidic residues predominate over residues 14-26; it reads PAEEKIRHEGNKL. The short motif at 55–60 is the PP-loop motif element; the sequence is SGGKDS. [4Fe-4S] cluster contacts are provided by Cys-130, Cys-133, and Cys-221. Residues 278-310 are disordered; it reads RPDANGDTAFDPIDPEDPREDAGDACASSPADG.

Belongs to the TtcA family. Homodimer. Mg(2+) is required as a cofactor. Requires [4Fe-4S] cluster as cofactor.

Its subcellular location is the cytoplasm. It catalyses the reaction cytidine(32) in tRNA + S-sulfanyl-L-cysteinyl-[cysteine desulfurase] + AH2 + ATP = 2-thiocytidine(32) in tRNA + L-cysteinyl-[cysteine desulfurase] + A + AMP + diphosphate + H(+). Its pathway is tRNA modification. In terms of biological role, catalyzes the ATP-dependent 2-thiolation of cytidine in position 32 of tRNA, to form 2-thiocytidine (s(2)C32). The sulfur atoms are provided by the cysteine/cysteine desulfurase (IscS) system. The polypeptide is tRNA-cytidine(32) 2-sulfurtransferase (Bordetella petrii (strain ATCC BAA-461 / DSM 12804 / CCUG 43448)).